Consider the following 358-residue polypeptide: Carbamoyl phosphate synthase small chain (358 aa).

The tract at residues 1–172 is CPSase; it reads MKAALALEDG…EAKRFESDGD (172 aa). L-glutamine is bound by residues Ser45, Gly222, and Gly224. Residues 174–358 form the Glutamine amidotransferase type-1 domain; it reads EVVLVDCGVK…RYVDMLREYR (185 aa). Cys249 serves as the catalytic Nucleophile. The L-glutamine site is built by Leu250, Gln253, Asn291, and Phe294. Catalysis depends on residues His333 and Glu335.

It belongs to the CarA family. As to quaternary structure, composed of two chains; the small (or glutamine) chain promotes the hydrolysis of glutamine to ammonia, which is used by the large (or ammonia) chain to synthesize carbamoyl phosphate. Tetramer of heterodimers (alpha,beta)4.

The enzyme catalyses hydrogencarbonate + L-glutamine + 2 ATP + H2O = carbamoyl phosphate + L-glutamate + 2 ADP + phosphate + 2 H(+). It catalyses the reaction L-glutamine + H2O = L-glutamate + NH4(+). Its pathway is amino-acid biosynthesis; L-arginine biosynthesis; carbamoyl phosphate from bicarbonate: step 1/1. The protein operates within pyrimidine metabolism; UMP biosynthesis via de novo pathway; (S)-dihydroorotate from bicarbonate: step 1/3. In terms of biological role, small subunit of the glutamine-dependent carbamoyl phosphate synthetase (CPSase). CPSase catalyzes the formation of carbamoyl phosphate from the ammonia moiety of glutamine, carbonate, and phosphate donated by ATP, constituting the first step of 2 biosynthetic pathways, one leading to arginine and/or urea and the other to pyrimidine nucleotides. The small subunit (glutamine amidotransferase) binds and cleaves glutamine to supply the large subunit with the substrate ammonia. In Archaeoglobus fulgidus (strain ATCC 49558 / DSM 4304 / JCM 9628 / NBRC 100126 / VC-16), this protein is Carbamoyl phosphate synthase small chain.